The primary structure comprises 342 residues: tRNA-specific 2-thiouridylase MnmA (342 aa).

Residues 6–13 and Leu32 each bind ATP; that span reads LLSGGVDS. Residue Cys92 is the Nucleophile of the active site. A disulfide bond links Cys92 and Cys191. Gly116 lines the ATP pocket. The interaction with tRNA stretch occupies residues 138–140; that stretch reads KDQ. Cys191 (cysteine persulfide intermediate) is an active-site residue. The interaction with tRNA stretch occupies residues 293–294; it reads RY.

This sequence belongs to the MnmA/TRMU family.

It localises to the cytoplasm. It catalyses the reaction S-sulfanyl-L-cysteinyl-[protein] + uridine(34) in tRNA + AH2 + ATP = 2-thiouridine(34) in tRNA + L-cysteinyl-[protein] + A + AMP + diphosphate + H(+). Functionally, catalyzes the 2-thiolation of uridine at the wobble position (U34) of tRNA, leading to the formation of s(2)U34. The chain is tRNA-specific 2-thiouridylase MnmA from Helicobacter pylori (strain ATCC 700392 / 26695) (Campylobacter pylori).